The following is a 673-amino-acid chain: Potassium voltage-gated channel subfamily KQT member 1 (673 aa).

Disordered regions lie at residues 1–28 and 61–80; these read MAAA…RGSA and GPSS…LGPR. At 1–118 the chain is on the cytoplasmic side; it reads MAAATSPPRA…YNFLERPTGW (118 aa). Residue serine 27 is modified to Phosphoserine. The segment covering 66-75 has biased composition (low complexity); that stretch reads AAPAASPAAA. A helical membrane pass occupies residues 119–140; that stretch reads KCFVYHFAVFLIVLVCLIFSVL. Over 141–151 the chain is Extracellular; it reads STIEQYVALAT. The chain crosses the membrane as a helical span at residues 152–174; that stretch reads GTLFWMEIVLVVFFGTEYAVRLW. At 175–190 the chain is on the cytoplasmic side; sequence SAGCRSKYVGIWGRLR. The helical transmembrane segment at 191-216 threads the bilayer; it reads FARKPISIIDLIVVVASMVVLCVGSK. Residues 217–224 are Extracellular-facing; the sequence is GQVFATSA. A helical; Voltage-sensor transmembrane segment spans residues 225-240; the sequence is IRGIRFLQILRMLHVD. Positions 236–244 are interaction with KCNE3; that stretch reads MLHVDRQGG. Residues 241-258 are Cytoplasmic-facing; the sequence is RQGGTWRLLGSVVFIHRQ. Residue glutamine 242 coordinates a 1,2-diacyl-sn-glycero-3-phospho-(1D-myo-inositol-4,5-bisphosphate). A helical transmembrane segment spans residues 259 to 281; the sequence is ELITTLYIGFLGLIFSSYFVYLA. At 282–297 the chain is on the extracellular side; the sequence is EKDAVNESGQVEFGSY. Asparagine 287 is a glycosylation site (N-linked (GlcNAc...) asparagine). The pore-forming intramembrane region spans 298-318; it reads ADALWWGVVTVTTIGYGDKVP. Over 319 to 320 the chain is Extracellular; it reads QT. Residues 321-346 traverse the membrane as a helical segment; that stretch reads WVGKTIASCFSVFAISFFALPAGILG. The Cytoplasmic segment spans residues 347 to 673; it reads SGFALKVQQK…VPGRGPEEGS (327 aa). The interaction with CALM stretch occupies residues 368 to 380; sequence AAASLIQTAWRCY. Serine 405 and serine 407 each carry phosphoserine. Residues 514 to 528 form an interaction with CALM; calcium-dependent region; the sequence is KVIRRMQYFVAKKKF. The interaction with KCNE1 C-terminus stretch occupies residues 534 to 571; it reads PYDVRDVIEQYSQGHLNLMVRIKELQRRLDQSIGRPAL. The segment at 587-615 is interaction with AKAP9; it reads IGARLNRVEDKVTQLDQRLELITDMLQQL. A C-terminal assembly domain (tetramerization) region spans residues 588-619; it reads GARLNRVEDKVTQLDQRLELITDMLQQLLSLH. A disordered region spans residues 619–673; that stretch reads HRGGTPGSRAPGGGGAQVAQPCSGGSINPELFLPSNALPTYEQLTVPGRGPEEGS. The span at 622 to 634 shows a compositional bias: gly residues; it reads GTPGSRAPGGGGA.

Belongs to the potassium channel family. KQT (TC 1.A.1.15) subfamily. Kv7.1/KCNQ1 sub-subfamily. Tetramer. Heterotetramer with KCNE1; targets to the membrane raft. Interacts (via C-terminus) with CALM; forms a heterooctameric structure (with 4:4 KCNQ1:CALM stoichiometry) in a calcium-independent manner. Interacts with AKAP9; targets protein kinase A (PKA) catalytic and regulatory subunits and protein phosphatase 1 (PP1) to the KCNQ1-KCNE1 complex, allowing PKA-mediated phosphorylation and increase of delayed rectifier potassium channel activity. Interacts with KCNE2; form a heterooligomer complex that targets to the membrane raft and leading to currents with an apparently instantaneous activation, a rapid deactivation process and a linear current-voltage relationship and decreases the amplitude of the outward current. Interacts with AP2M1; mediates estrogen-induced internalization via clathrin-coated vesicles. Interacts with NEDD4L; promotes internalization and decreases I(Ks) currents. Interacts with USP2; counteracts the NEDD4L-specific down-regulation of I(Ks) and restore plasma membrane localization. Heterotetramer with KCNQ5; has a voltage-gated potassium channel activity. Interacts with KCNE3; four KCNE3 molecules are bound to one KCNQ1 tetramer (4:4 KCNQ1:KCNE3 stoichiometry); alters membrane raft localization; affects KCNQ1 structure and gating properties. Interacts with KCNE4; impairs KCNQ1 localization in lipid rafts and inhibits voltage-gated potassium channel activity. Interacts with KCNE5; impairs KCNQ1 localization in lipid rafts and only conducts current upon strong and continued depolarization. Interacts with SLC5A3; forms coregulatory channel-transporter complexes that modulate Na(+)-coupled myo-inositol influx through the transporter. Post-translationally, ubiquitinated by NEDD4L; promotes internalization. The ubiquitinylated form is internalized through a clathrin-mediated endocytosis by interacting with AP2M1 and is recycled back to the cell membrane via RAB4A and RAB11A. Deubiquitinated by USP2; counteracts the NEDD4L-specific down-regulation of I(Ks) and restores the membrane localization.

Its subcellular location is the cell membrane. It localises to the cytoplasmic vesicle membrane. It is found in the early endosome. The protein localises to the membrane raft. The protein resides in the endoplasmic reticulum. Its subcellular location is the basolateral cell membrane. It localises to the apical cell membrane. It catalyses the reaction K(+)(in) = K(+)(out). Its activity is regulated as follows. PIP2 molecule is essential to activate KCNQ channels by inducing the coupling of the voltage-sensing domain (VSD) and the pore-forming domain (PD). Upon channel activation, PIP2 disrupts the VSD-calmodulin/CALM interactions, causing the release of CALM from the VSD which triggers the opening of the gate. Calcium potentiates KCNQ1 channel current through calcium-bound CALM. Calcium-bound CALM competes with PIP2 to stabilize the channel open state. In terms of biological role, pore-forming subunit of the voltage-gated potassium (Kv) channel involved in the regulation of cardiomyocyte excitability and important in normal development and functions of myocardium, inner ear, stomach and colon. Associates with KCNE beta subunits that modulates current kinetics. Induces a voltage-dependent by rapidly activating and slowly deactivating potassium-selective outward current. Also promotes a delayed voltage activated potassium current showing outward rectification characteristic. During beta-adrenergic receptor stimulation participates in cardiac repolarization by associating with KCNE1 to form the I(Ks) cardiac potassium current that increases the amplitude and slows down the activation kinetics of outward potassium current I(Ks). Muscarinic agonist oxotremorine-M strongly suppresses KCNQ1/KCNE1 current. When associated with KCNE3, forms the potassium channel that is important for cyclic AMP-stimulated intestinal secretion of chloride ions. This interaction with KCNE3 is reduced by 17beta-estradiol, resulting in the reduction of currents. During conditions of increased substrate load, maintains the driving force for proximal tubular and intestinal sodium ions absorption, gastric acid secretion, and cAMP-induced jejunal chloride ions secretion. Allows the provision of potassium ions to the luminal membrane of the secretory canaliculus in the resting state as well as during stimulated acid secretion. When associated with KCNE2, forms a heterooligomer complex leading to currents with an apparently instantaneous activation, a rapid deactivation process and a linear current-voltage relationship and decreases the amplitude of the outward current. When associated with KCNE4, inhibits voltage-gated potassium channel activity. When associated with KCNE5, this complex only conducts current upon strong and continued depolarization. Also forms a heterotetramer with KCNQ5 that has a voltage-gated potassium channel activity. Binds with phosphatidylinositol 4,5-bisphosphate. KCNQ1-KCNE2 channel associates with Na(+)-coupled myo-inositol symporter in the apical membrane of choroid plexus epithelium and regulates the myo-inositol gradient between blood and cerebrospinal fluid with an impact on neuron excitability. This Sus scrofa (Pig) protein is Potassium voltage-gated channel subfamily KQT member 1.